A 901-amino-acid polypeptide reads, in one-letter code: Probable inorganic carbon transporter subunit DabA (901 aa).

Zn(2+)-binding residues include C424, D426, H606, and C621.

This sequence belongs to the inorganic carbon transporter (TC 9.A.2) DabA family. Forms a complex with DabB. Zn(2+) serves as cofactor.

The protein localises to the cell membrane. Its function is as follows. Part of an energy-coupled inorganic carbon pump. This is Probable inorganic carbon transporter subunit DabA from Staphylococcus aureus (strain MRSA252).